Reading from the N-terminus, the 478-residue chain is Adenosylhomocysteinase (478 aa).

Substrate contacts are provided by threonine 56, aspartate 139, and glutamate 201. Position 202 to 204 (202 to 204 (TTT)) interacts with NAD(+). Residues lysine 231 and aspartate 235 each coordinate substrate. Residues asparagine 236, 265–270 (GYGDVG), glutamate 288, asparagine 323, 344–346 (IGH), and asparagine 392 each bind NAD(+).

It belongs to the adenosylhomocysteinase family. Requires NAD(+) as cofactor.

It localises to the cytoplasm. The catalysed reaction is S-adenosyl-L-homocysteine + H2O = L-homocysteine + adenosine. The protein operates within amino-acid biosynthesis; L-homocysteine biosynthesis; L-homocysteine from S-adenosyl-L-homocysteine: step 1/1. Its function is as follows. May play a key role in the regulation of the intracellular concentration of adenosylhomocysteine. The protein is Adenosylhomocysteinase of Corynebacterium diphtheriae (strain ATCC 700971 / NCTC 13129 / Biotype gravis).